Here is a 325-residue protein sequence, read N- to C-terminus: MNALTAVQNNAVDSGQDYSGFTLIPSAQSPRLLELTFTEQTTNRFLEQVAEWPVQALEYKSFLRFRVGKILDDLCANQLQPLLLKTLLNRAEGALLINAVGIDDVAQADEMVKLATAVAHLIGRSNFDAMSGQYYARFVVKNVDNSDSYLRQPHRVMELHNDGTYVEEITDYVLMMKIDEQNMQGGNSLLLHLDDWEHLGLFFRHPLARRPMRFAAPPSKNVSKDVFHPVFDVDQQGRPVMRYIDQFVQPKDFEEGVWLSELSDAIETSKGILSVPVPVGKFLLINNLFWLHGRDRFTPHPDLRRELMRQRGYFAYATHHYQTHQ.

Residues His160, Asp162, and His292 each contribute to the Fe cation site.

Belongs to the glutarate hydroxylase family. As to quaternary structure, homotetramer. Requires Fe(2+) as cofactor.

It catalyses the reaction glutarate + 2-oxoglutarate + O2 = (S)-2-hydroxyglutarate + succinate + CO2. It functions in the pathway amino-acid degradation. Its function is as follows. Acts as an alpha-ketoglutarate-dependent dioxygenase catalyzing hydroxylation of glutarate (GA) to L-2-hydroxyglutarate (L2HG). Functions in a L-lysine degradation pathway that proceeds via cadaverine, glutarate and L-2-hydroxyglutarate. The chain is Glutarate 2-hydroxylase from Escherichia coli O6:K15:H31 (strain 536 / UPEC).